Reading from the N-terminus, the 770-residue chain is Disabled homolog 2 (770 aa).

A compositionally biased stretch (polar residues) spans 1–16 (MSNEVETSATNGQPDQ). Residues 1–38 (MSNEVETSATNGQPDQQAAPKAPSKKEKKKGPEKTDEY) are disordered. Ser-2 is modified (N-acetylserine). Position 2 is a phosphoserine (Ser-2). A PID domain is found at 45–196 (GDGVKYKAKL…KAVENGSEAL (152 aa)). Tyr-170 bears the Phosphotyrosine mark. Phosphoserine is present on Ser-193. The required for localization to clathrin-coated pits stretch occupies residues 230–447 (ESKDILLVDL…KPGRGRRTAK (218 aa)). 2 disordered regions span residues 284–482 (LNFF…LQPN) and 604–629 (VSTQ…AGPP). 2 short sequence motifs (DPF) span residues 293 to 295 (DPF) and 298 to 300 (DPF). Residues 302 to 313 (QPDQSTPSSFDS) show a composition bias toward polar residues. A phosphoserine; in mitosis mark is found at Ser-326 and Ser-328. Positions 366–396 (FSSSQTQPAVRTQNGVSEREQNGFSVKSSPN) are enriched in polar residues. At Ser-401 the chain carries Phosphoserine. Polar residues-rich tracts occupy residues 407–425 (SIQN…SSPH), 466–480 (PSGQ…TALQ), and 604–616 (VSTQ…SSLL). Residues 604–732 (VSTQPPSMHS…SLPVTKSTDN (129 aa)) are sufficient for interaction with GRB2. A required for interaction with CSK region spans residues 619–627 (PPQPPPRAG). Residues 649-770 (KDVKEMFKDF…YRDPFGNPFA (122 aa)) are required for interaction with MYO6. The segment at 663-671 (PPAVPARKG) is required for interaction with GRB2 and CSK. 3 positions are modified to phosphoserine: Ser-675, Ser-723, and Ser-729. The interval 709–725 (NKINEPPKPAPRQVSLP) is sufficient for interaction with SH3KBP1 SH3 domain. The segment at 742-770 (SFGSSQASVASSQPVSSEMYRDPFGNPFA) is disordered. A compositionally biased stretch (low complexity) spans 745–758 (SSQASVASSQPVSS).

As to quaternary structure, interacts (via NPXY motif) with DAB2 (via PID domain). Can interact (via PID domain) with LDLR, APP, APLP1 and APLP2, and weakly with INPP5D (via NPXY motifs); the interaction is impaired by tyrosine phosphorylation of the respective NPXY motifs. Can weakly interact (via PID domain) with LRP1 (via NPXY motif); the interaction is enhanced by tyrosine phosphorylation of the NPXY motif. Interacts with LRP2 (via NPXY motif); the interaction is not affected by tyrosine phosphorylation of the NPXY motif. Interacts with clathrin; in vitro can assemble clathrin triskelia into polyhedral coats. Interacts with AP2A2, ITGB1, ITGB3, ITGB5, PIAS2, DAB2IP, NOSTRIN, FCHO1, DVL3, EPS15, ITSN1 and EPS15L1. Interacts with SH3KBP1 (via SH3 domains). Interacts with GRB2; competes with SOS1 for binding to GRB2 and the interaction is enhanced by EGF and NT-3 stimulation. Interacts with MAP3K7; the interaction is induced by TGF-beta stimulation and may mediate TGF-beta stimulated JNK activation. Interacts with AXIN1 and PPP1CA; the interactions are mutually exclusive. Interacts with the globular tail of MYO6. Interacts (via DPF motifs) with FCHO2; the interaction is direct and required for DAB2-mediated LDLR endocytosis. Interacts with LRP6; the interaction involves LRP6 phosphorylation by CK2 and sequesters LRP6 towards clathrin-mediated endocytosis. Associates with the TGF-beta receptor complex. Interacts with SMAD2 and SMAD3; the interactions are enhanced upon TGF-beta stimulation. Interacts with GRB2; the interaction is enhanced by EGF and NT-3 stimulation. Interacts with SRC; the interaction is enhanced by EGF stimulation. Phosphorylated. Phosphorylation during mitosis is leading to membrane displacement. As to expression, expressed in deep invaginations, inclusion cysts and the surface epithelial cells of the ovary. Also expressed in breast epithelial cells, spleen, thymus, prostate, testis, macrophages, fibroblasts, lung epithelial cells, placenta, brain stem, heart and small intestine. Expressed in kidney proximal tubular epithelial cells (at protein level).

The protein localises to the cytoplasm. It localises to the cytoplasmic vesicle. Its subcellular location is the clathrin-coated vesicle membrane. It is found in the membrane. The protein resides in the clathrin-coated pit. Adapter protein that functions as a clathrin-associated sorting protein (CLASP) required for clathrin-mediated endocytosis of selected cargo proteins. Can bind and assemble clathrin, and binds simultaneously to phosphatidylinositol 4,5-bisphosphate (PtdIns(4,5)P2) and cargos containing non-phosphorylated NPXY internalization motifs, such as the LDL receptor, to recruit them to clathrin-coated pits. Can function in clathrin-mediated endocytosis independently of the AP-2 complex. Involved in endocytosis of integrin beta-1; this function seems to redundant with the AP-2 complex and seems to require DAB2 binding to endocytosis accessory EH domain-containing proteins such as EPS15, EPS15L1 and ITSN1. Involved in endocytosis of cystic fibrosis transmembrane conductance regulator/CFTR. Involved in endocytosis of megalin/LRP2 lipoprotein receptor during embryonal development. Required for recycling of the TGF-beta receptor. Involved in CFTR trafficking to the late endosome. Involved in several receptor-mediated signaling pathways. Involved in TGF-beta receptor signaling and facilitates phosphorylation of the signal transducer SMAD2. Mediates TFG-beta-stimulated JNK activation. May inhibit the canoniocal Wnt/beta-catenin signaling pathway by stabilizing the beta-catenin destruction complex through a competing association with axin preventing its dephosphorylation through protein phosphatase 1 (PP1). Sequesters LRP6 towards clathrin-mediated endocytosis, leading to inhibition of Wnt/beta-catenin signaling. May activate non-canonical Wnt signaling. In cell surface growth factor/Ras signaling pathways proposed to inhibit ERK activation by interrupting the binding of GRB2 to SOS1 and to inhibit SRC by preventing its activating phosphorylation at 'Tyr-419'. Proposed to be involved in modulation of androgen receptor (AR) signaling mediated by SRC activation; seems to compete with AR for interaction with SRC. Plays a role in the CSF-1 signal transduction pathway. Plays a role in cellular differentiation. Involved in cell positioning and formation of visceral endoderm (VE) during embryogenesis and proposed to be required in the VE to respond to Nodal signaling coming from the epiblast. Required for the epithelial to mesenchymal transition, a process necessary for proper embryonic development. May be involved in myeloid cell differentiation and can induce macrophage adhesion and spreading. May act as a tumor suppressor. The chain is Disabled homolog 2 (DAB2) from Homo sapiens (Human).